The chain runs to 240 residues: MORN repeat-containing protein 3 (240 aa).

The tract at residues 6–35 is interaction with MDM2; sequence CPKKSESLWKGWDRKAQRNGLRSQVYAVNG. MORN repeat units follow at residues 38-60, 62-84, 91-113, 114-136, 137-159, 160-182, and 184-205; these read YVGE…KKGA, YEGD…DQQT, YSGW…PKEY, YEGD…NGDI, YEGQ…NGNR, YEGC…DHGQ, and FEGF…GRDE. An interaction with SIRT1 region spans residues 76 to 100; it reads TLSLPDQQTGKCRRVYSGWWKGDKK. Residues 206–240 are interaction with TP53; the sequence is APEPTQFPIPEVKILDPDGVLAEALAMFRKTEEGD.

As to quaternary structure, interacts with MEIG1. Interacts with TP53, MDM2 and SIRT1; the interactions mediate post-transcriptional modifications of TP53 by MDM2 and SIRT1.

The protein resides in the cytoplasmic vesicle. It is found in the secretory vesicle. Its subcellular location is the acrosome. Functionally, assembles a suppression complex (suppresome) by tethering SIRT1 and MDM2 to regulate composite modifications of p53/TP53. Confers both deacetylation-mediated functional inactivation, by SIRT1, and ubiquitination-dependent degradation, by MDM2, of p53/TP53, promoting a proliferative and cell survival behaviors. May play a role in the regulation of spermatogenesis. The chain is MORN repeat-containing protein 3 from Homo sapiens (Human).